The following is a 162-amino-acid chain: Lipoprotein signal peptidase (162 aa).

Transmembrane regions (helical) follow at residues 12-32 (WFAL…YFNS), 42-62 (VVEG…FSFL), 66-86 (GGWQ…WLGW), and 93-113 (FSGL…GNVI). Active-site residues include D123 and D142. A helical membrane pass occupies residues 133-153 (WYYPAFNLADSFICVGAALMV).

Belongs to the peptidase A8 family.

The protein resides in the cell inner membrane. It catalyses the reaction Release of signal peptides from bacterial membrane prolipoproteins. Hydrolyzes -Xaa-Yaa-Zaa-|-(S,diacylglyceryl)Cys-, in which Xaa is hydrophobic (preferably Leu), and Yaa (Ala or Ser) and Zaa (Gly or Ala) have small, neutral side chains.. It functions in the pathway protein modification; lipoprotein biosynthesis (signal peptide cleavage). This protein specifically catalyzes the removal of signal peptides from prolipoproteins. The sequence is that of Lipoprotein signal peptidase from Chromobacterium violaceum (strain ATCC 12472 / DSM 30191 / JCM 1249 / CCUG 213 / NBRC 12614 / NCIMB 9131 / NCTC 9757 / MK).